We begin with the raw amino-acid sequence, 436 residues long: Xaa-Arg dipeptidase (436 aa).

This sequence belongs to the peptidase M20A family.

The enzyme catalyses beta-alanyl-L-lysine + H2O = beta-alanine + L-lysine. It catalyses the reaction beta-alanyl-L-ornithine + H2O = beta-alanine + L-ornithine. The catalysed reaction is N(2)-(4-aminobutanoyl)-L-lysine + H2O = 4-aminobutanoate + L-lysine. It carries out the reaction N(2)-(4-aminobutanoyl)-L-ornithine + H2O = 4-aminobutanoate + L-ornithine. The enzyme catalyses N(2)-(4-aminobutanoyl)-L-arginine + H2O = 4-aminobutanoate + L-arginine. Functionally, catalyzes the peptide bond hydrolysis in dipeptides having basic amino acids lysine, ornithine or arginine at C-terminus. Postulated to function in a metabolite repair mechanism by eliminating alternate dipeptide by-products formed during carnosine synthesis. In Homo sapiens (Human), this protein is Xaa-Arg dipeptidase.